A 448-amino-acid chain; its full sequence is Ribosomal protein uS12 methylthiotransferase RimO (448 aa).

In terms of domain architecture, MTTase N-terminal spans 7–123; it reads EKVSLVSLGC…IAEIIAEKKQ (117 aa). Residues C16, C52, C86, C161, C165, and C168 each contribute to the [4Fe-4S] cluster site. The Radical SAM core domain occupies 147-377; sequence SSPHYTAYLK…MRTQARVSFK (231 aa). The region spanning 380-448 is the TRAM domain; it reads RTLVDSEEDV…DYDLIGEIVD (69 aa).

The protein belongs to the methylthiotransferase family. RimO subfamily. It depends on [4Fe-4S] cluster as a cofactor.

The protein resides in the cytoplasm. The catalysed reaction is L-aspartate(89)-[ribosomal protein uS12]-hydrogen + (sulfur carrier)-SH + AH2 + 2 S-adenosyl-L-methionine = 3-methylsulfanyl-L-aspartate(89)-[ribosomal protein uS12]-hydrogen + (sulfur carrier)-H + 5'-deoxyadenosine + L-methionine + A + S-adenosyl-L-homocysteine + 2 H(+). Functionally, catalyzes the methylthiolation of an aspartic acid residue of ribosomal protein uS12. This Citrifermentans bemidjiense (strain ATCC BAA-1014 / DSM 16622 / JCM 12645 / Bem) (Geobacter bemidjiensis) protein is Ribosomal protein uS12 methylthiotransferase RimO.